Consider the following 547-residue polypeptide: Chaperonin GroEL (547 aa).

ATP-binding positions include 30–33, Lys-51, 87–91, Gly-415, 479–481, and Asp-495; these read TLGP, DGTTT, and NAA.

This sequence belongs to the chaperonin (HSP60) family. As to quaternary structure, forms a cylinder of 14 subunits composed of two heptameric rings stacked back-to-back. Interacts with the co-chaperonin GroES.

It localises to the cytoplasm. It carries out the reaction ATP + H2O + a folded polypeptide = ADP + phosphate + an unfolded polypeptide.. Functionally, together with its co-chaperonin GroES, plays an essential role in assisting protein folding. The GroEL-GroES system forms a nano-cage that allows encapsulation of the non-native substrate proteins and provides a physical environment optimized to promote and accelerate protein folding. The protein is Chaperonin GroEL of Cupriavidus necator (strain ATCC 17699 / DSM 428 / KCTC 22496 / NCIMB 10442 / H16 / Stanier 337) (Ralstonia eutropha).